A 397-amino-acid chain; its full sequence is Acetate kinase 2 (397 aa).

Asn10 serves as a coordination point for Mg(2+). Lys17 serves as a coordination point for ATP. Residue Arg90 participates in substrate binding. Asp147 (proton donor/acceptor) is an active-site residue. ATP contacts are provided by residues 207-211 (HLGNG), 281-283 (DAR), and 329-333 (GIGEN). Glu385 is a Mg(2+) binding site.

The protein belongs to the acetokinase family. As to quaternary structure, homodimer. Mg(2+) serves as cofactor. Requires Mn(2+) as cofactor.

The protein resides in the cytoplasm. It carries out the reaction acetate + ATP = acetyl phosphate + ADP. The protein operates within metabolic intermediate biosynthesis; acetyl-CoA biosynthesis; acetyl-CoA from acetate: step 1/2. Its function is as follows. Catalyzes the formation of acetyl phosphate from acetate and ATP. Can also catalyze the reverse reaction. This chain is Acetate kinase 2, found in Vibrio parahaemolyticus serotype O3:K6 (strain RIMD 2210633).